Consider the following 337-residue polypeptide: Metacaspase III c (337 aa).

Propeptides lie at residues 1 to 6 (MGFLRR) and 116 to 125 (VPPAATGTRR). The residue at position 202 (C202) is a Cysteine sulfenic acid (-SOH). A disulfide bridge connects residues C202 and C259. H207 is an active-site residue. Ca(2+)-binding residues include D224, D240, and D241. The active site involves C264. Residue D271 coordinates Ca(2+). Residues 290-337 (NFDFKKLLGKFGIDDFDKFGGEALGKINGDALGKVGKDALGKLNKFFG) constitute a propeptide that is removed on maturation.

Belongs to the peptidase C14B family. Post-translationally, auto-proteolytic cleavage into a large and a small subunit which probably remain associated by non-covalent bonds. In terms of processing, following oxidative stress, the oxidation of Cys-202 leads to the formation of a disulfide bond between Cys-202 and Cys-259 which enhances catalytic activity.

Its activity is regulated as follows. Activated by Ca(2+). Its function is as follows. Cysteine protease that cleaves specifically after arginine residues. The polypeptide is Metacaspase III c (Phaeodactylum tricornutum (strain CCAP 1055/1)).